A 186-amino-acid polypeptide reads, in one-letter code: Alkyl hydroperoxide reductase AhpD (186 aa).

Cysteine 132 acts as the Proton donor in catalysis. Cysteine 132 and cysteine 135 are disulfide-bonded. Cysteine 135 functions as the Cysteine sulfenic acid (-SOH) intermediate in the catalytic mechanism.

This sequence belongs to the AhpD family.

The catalysed reaction is N(6)-[(R)-dihydrolipoyl]-L-lysyl-[lipoyl-carrier protein] + a hydroperoxide = N(6)-[(R)-lipoyl]-L-lysyl-[lipoyl-carrier protein] + an alcohol + H2O. Antioxidant protein with alkyl hydroperoxidase activity. Required for the reduction of the AhpC active site cysteine residues and for the regeneration of the AhpC enzyme activity. The sequence is that of Alkyl hydroperoxide reductase AhpD from Anaeromyxobacter dehalogenans (strain 2CP-1 / ATCC BAA-258).